The sequence spans 647 residues: tRNA 5-methylaminomethyl-2-thiouridine biosynthesis bifunctional protein MnmC (647 aa).

A tRNA (mnm(5)s(2)U34)-methyltransferase region spans residues 1–235 (MSIPPFSQAS…KRDMLCGRFT (235 aa)). Residues 250–647 (IGGGIAGTAS…RGLACHPLRR (398 aa)) are FAD-dependent cmnm(5)s(2)U34 oxidoreductase.

This sequence in the N-terminal section; belongs to the methyltransferase superfamily. tRNA (mnm(5)s(2)U34)-methyltransferase family. The protein in the C-terminal section; belongs to the DAO family. The cofactor is FAD.

Its subcellular location is the cytoplasm. It catalyses the reaction 5-aminomethyl-2-thiouridine(34) in tRNA + S-adenosyl-L-methionine = 5-methylaminomethyl-2-thiouridine(34) in tRNA + S-adenosyl-L-homocysteine + H(+). In terms of biological role, catalyzes the last two steps in the biosynthesis of 5-methylaminomethyl-2-thiouridine (mnm(5)s(2)U) at the wobble position (U34) in tRNA. Catalyzes the FAD-dependent demodification of cmnm(5)s(2)U34 to nm(5)s(2)U34, followed by the transfer of a methyl group from S-adenosyl-L-methionine to nm(5)s(2)U34, to form mnm(5)s(2)U34. The polypeptide is tRNA 5-methylaminomethyl-2-thiouridine biosynthesis bifunctional protein MnmC (Methylobacillus flagellatus (strain ATCC 51484 / DSM 6875 / VKM B-1610 / KT)).